A 494-amino-acid chain; its full sequence is Putative glucuronosyltransferase PGSIP7 (494 aa).

A helical transmembrane segment spans residues 4–24 (QRTLMFSCWVLSLLIIKTTAY). Aspartate 161 and aspartate 163 together coordinate Mn(2+). 5 consecutive transmembrane segments (helical) span residues 316–336 (YSAEMPWVLTQAVFYLGIILV), 362–382 (AFKFVALLFILSAYIIPFFII), 389–409 (LIGWSLYLTGSFALSTIPINA), 410–430 (FLLPILPVITPWLGIFGTLLV), and 444–464 (LSVFGYAFCCAPFLWVSFVKI).

This sequence belongs to the glycosyltransferase 8 family. Glycogenin subfamily. Mn(2+) serves as cofactor.

It is found in the membrane. This Arabidopsis thaliana (Mouse-ear cress) protein is Putative glucuronosyltransferase PGSIP7 (PGSIP7).